We begin with the raw amino-acid sequence, 96 residues long: Cytochrome b (96 aa).

Helical transmembrane passes span 1-15 (LCXI…FLAM), 39-60 (WLIR…YLHI), and 75-95 (WNVG…GYVL). Heme b is bound by residues H45 and H59.

This sequence belongs to the cytochrome b family. As to quaternary structure, the cytochrome bc1 complex contains 3 respiratory subunits (MT-CYB, CYC1 and UQCRFS1), 2 core proteins (UQCRC1 and UQCRC2) and probably 6 low-molecular weight proteins. Heme b is required as a cofactor.

The protein resides in the mitochondrion inner membrane. Its function is as follows. Component of the ubiquinol-cytochrome c reductase complex (complex III or cytochrome b-c1 complex) that is part of the mitochondrial respiratory chain. The b-c1 complex mediates electron transfer from ubiquinol to cytochrome c. Contributes to the generation of a proton gradient across the mitochondrial membrane that is then used for ATP synthesis. The sequence is that of Cytochrome b (mt-cyb) from Geophagus steindachneri (Red hump earth eater).